The primary structure comprises 396 residues: S-adenosylmethionine synthase (396 aa).

Histidine 15 lines the ATP pocket. Aspartate 17 serves as a coordination point for Mg(2+). Glutamate 43 is a binding site for K(+). Residues glutamate 56 and glutamine 99 each contribute to the L-methionine site. A flexible loop region spans residues 99-109 (QSADIALGVDR). Residues 175–177 (DGK), 241–242 (RF), aspartate 250, 256–257 (RK), alanine 273, and lysine 277 each bind ATP. Aspartate 250 lines the L-methionine pocket. Lysine 281 is an L-methionine binding site.

It belongs to the AdoMet synthase family. In terms of assembly, homotetramer; dimer of dimers. Mg(2+) serves as cofactor. K(+) is required as a cofactor.

Its subcellular location is the cytoplasm. The enzyme catalyses L-methionine + ATP + H2O = S-adenosyl-L-methionine + phosphate + diphosphate. It participates in amino-acid biosynthesis; S-adenosyl-L-methionine biosynthesis; S-adenosyl-L-methionine from L-methionine: step 1/1. Functionally, catalyzes the formation of S-adenosylmethionine (AdoMet) from methionine and ATP. The overall synthetic reaction is composed of two sequential steps, AdoMet formation and the subsequent tripolyphosphate hydrolysis which occurs prior to release of AdoMet from the enzyme. The protein is S-adenosylmethionine synthase of Desulfitobacterium hafniense (strain DSM 10664 / DCB-2).